We begin with the raw amino-acid sequence, 217 residues long: Sentrin-specific protease 8 (217 aa).

At M1 the chain carries N-acetylmethionine. The segment at 11-174 (SLLRQSDVSL…MYVICNTEAL (164 aa)) is protease. Catalysis depends on residues H102 and D119. C163 acts as the Nucleophile in catalysis.

It belongs to the peptidase C48 family.

Functionally, protease that catalyzes two essential functions in the NEDD8 pathway: processing of full-length NEDD8 to its mature form and deconjugation of NEDD8 from targeted proteins such as cullins or p53. This chain is Sentrin-specific protease 8 (Senp8), found in Rattus norvegicus (Rat).